Reading from the N-terminus, the 120-residue chain is Ribonuclease P protein component 2 (120 aa).

This sequence belongs to the eukaryotic/archaeal RNase P protein component 2 family. As to quaternary structure, consists of a catalytic RNA component and at least 4-5 protein subunits.

The protein resides in the cytoplasm. The catalysed reaction is Endonucleolytic cleavage of RNA, removing 5'-extranucleotides from tRNA precursor.. In terms of biological role, part of ribonuclease P, a protein complex that generates mature tRNA molecules by cleaving their 5'-ends. The polypeptide is Ribonuclease P protein component 2 (Methanobrevibacter smithii (strain ATCC 35061 / DSM 861 / OCM 144 / PS)).